Reading from the N-terminus, the 168-residue chain is Type-2 ice-structuring protein (168 aa).

Positions 1–17 are cleaved as a signal peptide; sequence MLTVSLLVCAMMALTQA. A propeptide spanning residues 18–34 is cleaved from the precursor; that stretch reads DHDGVLKGTATEAGEVS. 5 cysteine pairs are disulfide-bonded: C45–C56, C73–C163, C107–C138, C127–C149, and C139–C155. Positions 52-164 constitute a C-type lectin domain; sequence HGQRCFYSEA…CPASHASICA (113 aa).

The protein resides in the secreted. Functionally, has antifreeze activity to protect fish blood from freezing at subzero sea water temperatures. Binds to ice crystals and inhibits their growth. The thermal hysteresis (TH) activity, the ability to lower the blood freezing point, is approximately 0.45 degrees Celsius at 0.15 mM for this protein. This Brachyopsis segaliensis (Sea poacher) protein is Type-2 ice-structuring protein.